The following is a 253-amino-acid chain: Acidic 26 kDa endochitinase (253 aa).

The signal sequence occupies residues 1–24 (MKFNIVSPVALSCLFFLFLTGTLA). E92 (proton donor) is an active-site residue. C212 and C244 are disulfide-bonded.

The protein belongs to the glycosyl hydrolase 19 family. Chitinase class II subfamily.

The protein localises to the secreted. Its subcellular location is the extracellular space. It catalyses the reaction Random endo-hydrolysis of N-acetyl-beta-D-glucosaminide (1-&gt;4)-beta-linkages in chitin and chitodextrins.. In terms of biological role, defense against chitin-containing fungal pathogens. The protein is Acidic 26 kDa endochitinase (CHI3) of Solanum lycopersicum (Tomato).